The sequence spans 938 residues: E3 ubiquitin-protein ligase CBL-B (938 aa).

The interval 35–167 (PPKQAAADRR…KAIFPNGQFQ (133 aa)) is 4H. Positions 35–343 (PPKQAAADRR…GRSYNPDLTG (309 aa)) constitute a Cbl-PTB domain. The tract at residues 168 to 240 (GDNFRITKAD…FEFDIFTRLF (73 aa)) is EF-hand-like. Residues D221, T223, N225, Y227, and E232 each coordinate Ca(2+). Residues 241 to 343 (QPWGSILRNW…GRSYNPDLTG (103 aa)) are SH2-like. Phosphoserine; by PKC/PRKCQ is present on S282. Residue R286 participates in 4-O-phospho-L-tyrosine binding. The segment at 344–372 (LCEPTPHDHIKVTQEQYELYCEMGSTFQL) is linker. Y363 is subject to Phosphotyrosine. The RING-type zinc finger occupies 373 to 412 (CKICAENDKDVKIEPCGHLMCTSCLTAWQESDGQGCPFCR). The tract at residues 465–588 (ASVRKCTDRQ…SVPSRDQPMP (124 aa)) is disordered. Residues 473–486 (RQNSPVTSPGSSPL) are compositionally biased toward polar residues. A phosphoserine mark is found at S476, S480, S484, S521, S525, and S529. Positions 543–567 (PLPAPPPPLRDPPPPPERPPPIPPD) are interaction with VAV1. Residues 544–566 (LPAPPPPLRDPPPPPERPPPIPP) show a composition bias toward pro residues. Position 633 is a phosphoserine (S633). Residues Y664 and Y708 each carry the phosphotyrosine modification. 2 disordered regions span residues 702–725 (EEDD…PSHC) and 771–885 (DALP…EAAL). Over residues 714 to 724 (HPVSLNSQPSH) the composition is skewed to polar residues. Over residues 775–784 (PSLPPPPPPA) the composition is skewed to pro residues. Residues 794–804 (PPGSSSRPSSG) are compositionally biased toward low complexity. The span at 839–855 (NRASQDYDQLPSSSDGS) shows a compositional bias: polar residues. Residue Y845 is modified to Phosphotyrosine. Residues 847–883 (QLPSSSDGSQAPARPPKPRPRRTAPEIHHRKPHGPEA) are interaction with SH3KBP1. Residues 862–878 (PKPRPRRTAPEIHHRKP) are compositionally biased toward basic residues. A UBA domain is found at 887–926 (NVDAKIAKLMGEGYAFEEVKRALEIAQNNLEVARSILREF).

As to quaternary structure, interacts with SH3 domain-containing proteins LCK, CRK and SORBS1. Interacts with LCP2 and ZAP70. Interacts with CBL. Interacts with SH3 domain-containing proteins VAV1, FYN, FGR, PLCG1, GRB2, CRKL, PIK3R1 and SH3KBP1/CIN85. Identified in heterotrimeric complexes with SH3KBP1/CIN85, CD2AP and ARHGEF7, where one CBLB peptide binds two copies of the other protein. Interacts with poly-ubiquitinated proteins. Dimerization is required for the binding of poly-ubiquitin, but not for the binding of mono-ubiquitin. Interacts with EGFR (phosphorylated). Interacts with IFT20. Phosphorylated on tyrosine and serine residues upon TCR or BCR activation, and upon various types of cell stimulation. In terms of processing, auto-ubiquitinated upon EGF-mediated cell activation or upon T-cell costimulation by CD28; which promotes proteasomal degradation.

It localises to the cytoplasm. It catalyses the reaction S-ubiquitinyl-[E2 ubiquitin-conjugating enzyme]-L-cysteine + [acceptor protein]-L-lysine = [E2 ubiquitin-conjugating enzyme]-L-cysteine + N(6)-ubiquitinyl-[acceptor protein]-L-lysine.. The protein operates within protein modification; protein ubiquitination. Its function is as follows. E3 ubiquitin-protein ligase which accepts ubiquitin from specific E2 ubiquitin-conjugating enzymes, and transfers it to substrates, generally promoting their degradation by the proteasome. Negatively regulates TCR (T-cell receptor), BCR (B-cell receptor) and FCER1 (high affinity immunoglobulin epsilon receptor) signal transduction pathways. In naive T-cells, inhibits VAV1 activation upon TCR engagement and imposes a requirement for CD28 costimulation for proliferation and IL-2 production. Also acts by promoting PIK3R1/p85 ubiquitination, which impairs its recruitment to the TCR and subsequent activation. In activated T-cells, inhibits PLCG1 activation and calcium mobilization upon restimulation and promotes anergy. In B-cells, acts by ubiquitinating SYK and promoting its proteasomal degradation. Slightly promotes SRC ubiquitination. May be involved in EGFR ubiquitination and internalization. May be functionally coupled with the E2 ubiquitin-protein ligase UB2D3. In association with CBL, required for proper feedback inhibition of ciliary platelet-derived growth factor receptor-alpha (PDGFRA) signaling pathway via ubiquitination and internalization of PDGFRA. The protein is E3 ubiquitin-protein ligase CBL-B (Cblb) of Rattus norvegicus (Rat).